Consider the following 271-residue polypeptide: Mannosyl-3-phosphoglycerate phosphatase (271 aa).

Residue D13 is the Nucleophile of the active site. 3 residues coordinate Mg(2+): D13, D15, and D214.

This sequence belongs to the HAD-like hydrolase superfamily. MPGP family. It depends on Mg(2+) as a cofactor.

Its subcellular location is the cytoplasm. It catalyses the reaction 2-O-(alpha-D-mannosyl)-3-phosphoglycerate + H2O = (2R)-2-O-(alpha-D-mannosyl)-glycerate + phosphate. This Escherichia coli O81 (strain ED1a) protein is Mannosyl-3-phosphoglycerate phosphatase.